We begin with the raw amino-acid sequence, 516 residues long: Cytochrome P450 monooxygenase dtxS2 (516 aa).

The chain crosses the membrane as a helical span at residues 23 to 43 (ILASVIVLLGLKVATILYTAF). N-linked (GlcNAc...) asparagine glycosylation occurs at N187. The helical transmembrane segment at 229–249 (VLVPLLVFPYISWLLVWWLLS) threads the bilayer. C458 is a heme binding site.

This sequence belongs to the cytochrome P450 family. The cofactor is heme.

Its subcellular location is the membrane. The protein operates within secondary metabolite biosynthesis. In terms of biological role, cytochrome P450 monooxygenase; part of the gene cluster that mediates the biosynthesis of destruxins, insecticidal cyclic hexadepsipeptides which induce flaccid paralysis and visceral muscle contraction in insects through targeting the calcium channels and vacuolar-type ATPases. The aldo-keto reductase dtxS3 converts alpha-ketoisocaproic acid from deaminated leucine into alpha-hydroxyisocaproic acid (HIC), which is the first substrate for destruxin assembly by dtxS1. L-aspartate decarboxylase dtxS4 converts aspartic acid into beta-alanine, the last substrate for the destruxin assembly line performed by dtxS1. The nonribosomal peptide synthetase dtxS1 synthesizes destruxins B and B2, whereas the cytochrome P450 monooxygenase dtxS2 is required to convert destruxin B into other destruxin derivatives, including destructins C, D, A and E. Destruxin E-diol (ED) is further produced in a non-enzymatic manner from destruxin E. Destruxins play an important role in virulence and escape from insect host immune defenses. The sequence is that of Cytochrome P450 monooxygenase dtxS2 from Metarhizium robertsii (strain ARSEF 23 / ATCC MYA-3075) (Metarhizium anisopliae (strain ARSEF 23)).